Consider the following 172-residue polypeptide: Translation initiation factor IF-3 (172 aa).

It belongs to the IF-3 family. Monomer.

Its subcellular location is the cytoplasm. IF-3 binds to the 30S ribosomal subunit and shifts the equilibrium between 70S ribosomes and their 50S and 30S subunits in favor of the free subunits, thus enhancing the availability of 30S subunits on which protein synthesis initiation begins. The protein is Translation initiation factor IF-3 of Campylobacter jejuni subsp. doylei (strain ATCC BAA-1458 / RM4099 / 269.97).